A 992-amino-acid chain; its full sequence is Translation initiation factor IF-2 (992 aa).

Disordered stretches follow at residues 154–173 (RRLRDEQAAQEAAREREREA) and 338–399 (AAPG…RPES). One can recognise a tr-type G domain in the interval 492–661 (PRAPVVTVMG…LLQAEVLELK (170 aa)). Positions 501 to 508 (GHVDHGKT) are G1. A GTP-binding site is contributed by 501–508 (GHVDHGKT). Residues 526 to 530 (GITQH) form a G2 region. The interval 547–550 (DTPG) is G3. GTP contacts are provided by residues 547–551 (DTPGH) and 601–604 (NKID). The interval 601–604 (NKID) is G4. A G5 region spans residues 637-639 (SAH).

The protein belongs to the TRAFAC class translation factor GTPase superfamily. Classic translation factor GTPase family. IF-2 subfamily.

It is found in the cytoplasm. Functionally, one of the essential components for the initiation of protein synthesis. Protects formylmethionyl-tRNA from spontaneous hydrolysis and promotes its binding to the 30S ribosomal subunits. Also involved in the hydrolysis of GTP during the formation of the 70S ribosomal complex. This chain is Translation initiation factor IF-2, found in Polaromonas naphthalenivorans (strain CJ2).